A 702-amino-acid polypeptide reads, in one-letter code: Elongation factor G (702 aa).

A tr-type G domain is found at 8 to 286 (DKVRNIGIIA…AVVEYLPSPL (279 aa)). GTP contacts are provided by residues 17–24 (AHIDAGKT), 85–89 (DTPGH), and 139–142 (NKMD).

Belongs to the TRAFAC class translation factor GTPase superfamily. Classic translation factor GTPase family. EF-G/EF-2 subfamily.

Its subcellular location is the cytoplasm. Catalyzes the GTP-dependent ribosomal translocation step during translation elongation. During this step, the ribosome changes from the pre-translocational (PRE) to the post-translocational (POST) state as the newly formed A-site-bound peptidyl-tRNA and P-site-bound deacylated tRNA move to the P and E sites, respectively. Catalyzes the coordinated movement of the two tRNA molecules, the mRNA and conformational changes in the ribosome. This chain is Elongation factor G, found in Chloroflexus aurantiacus (strain ATCC 29366 / DSM 635 / J-10-fl).